A 473-amino-acid chain; its full sequence is Fumarate hydratase class II (473 aa).

Substrate contacts are provided by residues 104–106, 128–131, 138–140, and Thr-186; these read SGT, HPND, and SSN. His-187 acts as the Proton donor/acceptor in catalysis. Ser-318 is a catalytic residue. Substrate is bound by residues Ser-319 and 324-326; that span reads KVN.

This sequence belongs to the class-II fumarase/aspartase family. Fumarase subfamily. Homotetramer.

Its subcellular location is the cytoplasm. The enzyme catalyses (S)-malate = fumarate + H2O. Its pathway is carbohydrate metabolism; tricarboxylic acid cycle; (S)-malate from fumarate: step 1/1. Functionally, involved in the TCA cycle. Catalyzes the stereospecific interconversion of fumarate to L-malate. This chain is Fumarate hydratase class II, found in Corynebacterium glutamicum (strain ATCC 13032 / DSM 20300 / JCM 1318 / BCRC 11384 / CCUG 27702 / LMG 3730 / NBRC 12168 / NCIMB 10025 / NRRL B-2784 / 534).